A 188-amino-acid polypeptide reads, in one-letter code: dTTP/UTP pyrophosphatase (188 aa).

The Proton acceptor role is filled by aspartate 70.

It belongs to the Maf family. YhdE subfamily. A divalent metal cation serves as cofactor.

It localises to the cytoplasm. The enzyme catalyses dTTP + H2O = dTMP + diphosphate + H(+). The catalysed reaction is UTP + H2O = UMP + diphosphate + H(+). In terms of biological role, nucleoside triphosphate pyrophosphatase that hydrolyzes dTTP and UTP. May have a dual role in cell division arrest and in preventing the incorporation of modified nucleotides into cellular nucleic acids. The chain is dTTP/UTP pyrophosphatase from Clostridium beijerinckii (strain ATCC 51743 / NCIMB 8052) (Clostridium acetobutylicum).